We begin with the raw amino-acid sequence, 303 residues long: D-alanine--D-alanine ligase (303 aa).

An ATP-grasp domain is found at 99–293 (TYRFLKDIVE…FEELVEIILK (195 aa)). Residue 125–176 (GYPCVVKPRREGSSIGVFICESDEEFQHALKEDLPRYGSVIVQKYIPGREMT) participates in ATP binding. Residues D248, E260, and N262 each coordinate Mg(2+).

It belongs to the D-alanine--D-alanine ligase family. The cofactor is Mg(2+). Mn(2+) serves as cofactor.

The protein localises to the cytoplasm. The enzyme catalyses 2 D-alanine + ATP = D-alanyl-D-alanine + ADP + phosphate + H(+). It functions in the pathway cell wall biogenesis; peptidoglycan biosynthesis. Its function is as follows. Cell wall formation. This is D-alanine--D-alanine ligase from Thermotoga petrophila (strain ATCC BAA-488 / DSM 13995 / JCM 10881 / RKU-1).